The following is a 121-amino-acid chain: MLFTYNKNPQYDSILMYAASNGYDKIVKLILDKVGTSFKEHIHETILLWAFQNEHYETIQLLIDHGFNKLVISNLLTNKNQFDVSNKYLIYFMADEEYYYQVRENIRNDQRVSTIKNTYRI.

ANK repeat units follow at residues 10–40 (QYDSILMYAASNGYDKIVKLILDKVGTSFKE) and 42–71 (IHETILLWAFQNEHYETIQLLIDHGFNKLV).

This chain is Putative ankyrin repeat protein L215, found in Acanthamoeba polyphaga mimivirus (APMV).